The primary structure comprises 434 residues: D-amino acid dehydrogenase (434 aa).

Residue 3 to 17 (VVILGSGVVGVTSAW) coordinates FAD.

This sequence belongs to the DadA oxidoreductase family. It depends on FAD as a cofactor.

The catalysed reaction is a D-alpha-amino acid + A + H2O = a 2-oxocarboxylate + AH2 + NH4(+). It participates in amino-acid degradation; D-alanine degradation; NH(3) and pyruvate from D-alanine: step 1/1. Functionally, oxidative deamination of D-amino acids. The polypeptide is D-amino acid dehydrogenase (Yersinia pseudotuberculosis serotype O:3 (strain YPIII)).